A 478-amino-acid chain; its full sequence is Cysteine--tRNA ligase (478 aa).

C29 lines the Zn(2+) pocket. The 'HIGH' region motif lies at 31–41 (ATVQSIPHIGH). Positions 207, 232, and 236 each coordinate Zn(2+). The 'KMSKS' region signature appears at 263–267 (KMSKS). Position 266 (K266) interacts with ATP.

The protein belongs to the class-I aminoacyl-tRNA synthetase family. In terms of assembly, monomer. It depends on Zn(2+) as a cofactor.

It is found in the cytoplasm. It catalyses the reaction tRNA(Cys) + L-cysteine + ATP = L-cysteinyl-tRNA(Cys) + AMP + diphosphate. The polypeptide is Cysteine--tRNA ligase (Corynebacterium jeikeium (strain K411)).